The chain runs to 334 residues: Thiamine-binding periplasmic protein (334 aa).

The first 23 residues, 1–23 (MRLLSLLTFSLFAVIGLAPAAQA), serve as a signal peptide directing secretion. Residues 64–65 (DG), 166–167 (AT), W202, and 220–223 (YTTS) contribute to the thiamine site.

This sequence belongs to the bacterial solute-binding protein 1 family. As to quaternary structure, the complex is composed of two ATP-binding proteins (ThiQ), two transmembrane proteins (ThiP) and a solute-binding protein (ThiB).

The protein resides in the periplasm. Its function is as follows. Part of the ABC transporter complex ThiBPQ involved in thiamine import. This is Thiamine-binding periplasmic protein (thiB) from Brucella suis biovar 1 (strain 1330).